A 2217-amino-acid chain; its full sequence is Protein irg-7 (2217 aa).

An N-terminal signal peptide occupies residues 1-16 (MRNWVLIAALAVICLA). EGF-like domains lie at 370-405 (SGSTCSQMLCANGGFLPTPTSDRCQCPEGFSGFHCQ) and 864-896 (TGTYCQNIICYNGGTASGDHCVCPPGYAGESCE). Intrachain disulfides connect Cys379–Cys393, Cys395–Cys404, Cys868–Cys873, Cys886–Cys895, Cys1212–Cys1312, Cys1285–Cys1304, Cys1508–Cys1521, and Cys1523–Cys1532. The C-type lectin domain maps to 1188–1313 (IGQYCIKFMA…CAEPRAFACQ (126 aa)). Positions 1499–1533 (TGSRCTVPICVNGGTRNPDEATCSCPDGYEGPNCQ) constitute an EGF-like 3 domain. In terms of domain architecture, VWFA spans 2016–2202 (DVVFMIDGSQ…NNQIKTIQQL (187 aa)).

It localises to the secreted. In terms of biological role, plays a role in innate immunity, probably via the atf-7 pathway, to confer resistance to pathogenic bacteria. May also play a role in the regulation of longevity. The chain is Protein irg-7 from Caenorhabditis elegans.